The sequence spans 212 residues: Synaptosomal-associated protein 25 (212 aa).

2 t-SNARE coiled-coil homology domains span residues 26–88 and 148–210; these read QGVA…LSGM and DARE…AHQL.

This sequence belongs to the SNAP-25 family. As to expression, exclusively found in brain and ganglia.

Its subcellular location is the synapse. The protein localises to the synaptosome. In terms of biological role, may play an important role in the synaptic function of specific neuronal systems. Associates with proteins involved in vesicle docking and membrane fusion. The chain is Synaptosomal-associated protein 25 (Snap25) from Drosophila melanogaster (Fruit fly).